The sequence spans 245 residues: uncharacterized protein (245 aa).

This is an uncharacterized protein from Escherichia coli.